The chain runs to 48 residues: ATP synthase protein 8 (48 aa).

Residues 13–32 (LTYGFLLMITLLILFSQFFL) traverse the membrane as a helical segment.

The protein belongs to the ATPase protein 8 family. F-type ATPases have 2 components, CF(1) - the catalytic core - and CF(0) - the membrane proton channel. In yeast, the dimeric form of ATP synthase consists of 17 polypeptides: alpha, beta, gamma, delta, epsilon, 4 (B), 5 (OSCP), 6 (A), 8, 9 (C), d, E (Tim11), f, g, h, i/j and k.

The protein localises to the mitochondrion membrane. Mitochondrial membrane ATP synthase (F(1)F(0) ATP synthase or Complex V) produces ATP from ADP in the presence of a proton gradient across the membrane which is generated by electron transport complexes of the respiratory chain. F-type ATPases consist of two structural domains, F(1) - containing the extramembraneous catalytic core and F(0) - containing the membrane proton channel, linked together by a central stalk and a peripheral stalk. During catalysis, ATP synthesis in the catalytic domain of F(1) is coupled via a rotary mechanism of the central stalk subunits to proton translocation. Part of the complex F(0) domain. Minor subunit located with subunit a in the membrane. In Saccharomyces cerevisiae (strain ATCC 204508 / S288c) (Baker's yeast), this protein is ATP synthase protein 8 (ATP8).